We begin with the raw amino-acid sequence, 290 residues long: Enoyl-CoA hydratase, mitochondrial (290 aa).

The transit peptide at 1–27 (MAALRALLPRVRAPLRPWLFCPVQRSF) directs the protein to the mitochondrion. Residues 98–101 (ADIK) and glycine 141 each bind substrate. At lysine 101 the chain carries N6-acetyllysine; alternate. Lysine 101 is modified (N6-succinyllysine; alternate). At lysine 204 the chain carries N6-succinyllysine. At lysine 211 the chain carries N6-acetyllysine.

The protein belongs to the enoyl-CoA hydratase/isomerase family. As to quaternary structure, homohexamer; dimer of trimers.

The protein localises to the mitochondrion matrix. It carries out the reaction a (3S)-3-hydroxyacyl-CoA = a (2E)-enoyl-CoA + H2O. The enzyme catalyses a (3E)-enoyl-CoA = a 4-saturated (2E)-enoyl-CoA. The catalysed reaction is (3E)-hexenoyl-CoA = (2E)-hexenoyl-CoA. It catalyses the reaction (3S)-3-hydroxybutanoyl-CoA = (2E)-butenoyl-CoA + H2O. It carries out the reaction 3-hydroxyisovaleryl-CoA = 3-methylbut-2-enoyl-CoA + H2O. The enzyme catalyses 3-hydroxypropanoyl-CoA = acryloyl-CoA + H2O. The catalysed reaction is 3-hydroxybutanoyl-CoA = (2E)-butenoyl-CoA + H2O. It catalyses the reaction 2-methylpropenoyl-CoA + H2O = (S)-3-hydroxyisobutanoyl-CoA. It carries out the reaction (3S)-hydroxyhexanoyl-CoA = (2E)-hexenoyl-CoA + H2O. The enzyme catalyses (3S)-hydroxydecanoyl-CoA = (2E)-decenoyl-CoA + H2O. It functions in the pathway lipid metabolism; fatty acid beta-oxidation. In terms of biological role, converts unsaturated trans-2-enoyl-CoA species ((2E)-enoyl-CoA) to the corresponding 3(S)-3-hydroxyacyl-CoA species through addition of a water molecule to the double bond. Catalyzes the hydration of medium- and short-chained fatty enoyl-CoA thioesters from 4 carbons long (C4) up to C16. Has high substrate specificity for crotonyl-CoA ((2E)-butenoyl-CoA) and moderate specificity for acryloyl-CoA, 3-methylcrotonyl-CoA (3-methyl-(2E)-butenoyl-CoA) and methacrylyl-CoA ((2E)-2-methylpropenoyl-CoA). Can bind tiglyl-CoA (2-methylcrotonoyl-CoA), but hydrates only a small amount of this substrate. Plays a key role in the beta-oxidation spiral of short- and medium-chain fatty acid oxidation. At a lower rate than the hydratase reaction, catalyzes the isomerase reaction of trans-3-enoyl-CoA species (such as (3E)-hexenoyl-CoA) to trans-2-enoyl-CoA species (such as (2E)-hexenoyl-CoA), which are subsequently hydrated to 3(S)-3-hydroxyacyl-CoA species (such as (3S)-hydroxyhexanoyl-CoA). In Bos taurus (Bovine), this protein is Enoyl-CoA hydratase, mitochondrial (ECHS1).